Consider the following 247-residue polypeptide: Phosphonates import ATP-binding protein PhnC (247 aa).

Positions 5 to 246 (IEVKNLVKNY…EDDIRKVYQT (242 aa)) constitute an ABC transporter domain. 37-44 (GESGAGKS) serves as a coordination point for ATP.

Belongs to the ABC transporter superfamily. Phosphonates importer (TC 3.A.1.9.1) family. In terms of assembly, the complex is composed of two ATP-binding proteins (PhnC), two transmembrane proteins (PhnE) and a solute-binding protein (PhnD).

Its subcellular location is the cell inner membrane. The enzyme catalyses phosphonate(out) + ATP + H2O = phosphonate(in) + ADP + phosphate + H(+). Its function is as follows. Part of the ABC transporter complex PhnCDE involved in phosphonates import. Responsible for energy coupling to the transport system. The chain is Phosphonates import ATP-binding protein PhnC from Fusobacterium nucleatum subsp. nucleatum (strain ATCC 25586 / DSM 15643 / BCRC 10681 / CIP 101130 / JCM 8532 / KCTC 2640 / LMG 13131 / VPI 4355).